A 248-amino-acid polypeptide reads, in one-letter code: DNA repair protein RecO (248 aa).

It belongs to the RecO family.

Its function is as follows. Involved in DNA repair and RecF pathway recombination. The protein is DNA repair protein RecO of Streptomyces griseus subsp. griseus (strain JCM 4626 / CBS 651.72 / NBRC 13350 / KCC S-0626 / ISP 5235).